The following is a 354-amino-acid chain: Sulfate/thiosulfate import ATP-binding protein CysA (354 aa).

The ABC transporter domain maps to 3 to 237 (IEVRGLSKRF…PATPFVYGFL (235 aa)). ATP is bound at residue 35 to 42 (GPSGCGKT).

Belongs to the ABC transporter superfamily. Sulfate/tungstate importer (TC 3.A.1.6) family. The complex is composed of two ATP-binding proteins (CysA), two transmembrane proteins (CysT and CysW) and a solute-binding protein (CysP).

It localises to the cell inner membrane. It catalyses the reaction sulfate(out) + ATP + H2O = sulfate(in) + ADP + phosphate + H(+). The enzyme catalyses thiosulfate(out) + ATP + H2O = thiosulfate(in) + ADP + phosphate + H(+). In terms of biological role, part of the ABC transporter complex CysAWTP involved in sulfate/thiosulfate import. Responsible for energy coupling to the transport system. The chain is Sulfate/thiosulfate import ATP-binding protein CysA from Bordetella parapertussis (strain 12822 / ATCC BAA-587 / NCTC 13253).